The sequence spans 451 residues: Cobyrinate a,c-diamide synthase (451 aa).

The GATase cobBQ-type domain occupies 246–437 (KIGVAYDEVF…VHTHVAAMPN (192 aa)). The active-site Nucleophile is the Cys-328.

Belongs to the CobB/CbiA family. Mg(2+) is required as a cofactor.

It carries out the reaction cob(II)yrinate + 2 L-glutamine + 2 ATP + 2 H2O = cob(II)yrinate a,c diamide + 2 L-glutamate + 2 ADP + 2 phosphate + 2 H(+). The enzyme catalyses Ni-sirohydrochlorin + 2 L-glutamine + 2 ATP + 2 H2O = Ni-sirohydrochlorin a,c-diamide + 2 L-glutamate + 2 ADP + 2 phosphate + 2 H(+). The protein operates within cofactor biosynthesis; adenosylcobalamin biosynthesis; cob(II)yrinate a,c-diamide from sirohydrochlorin (anaerobic route): step 10/10. In terms of biological role, catalyzes the ATP-dependent amidation of the two carboxylate groups at positions a and c of cobyrinate, using either L-glutamine or ammonia as the nitrogen source. Involved in the biosynthesis of the unique nickel-containing tetrapyrrole coenzyme F430, the prosthetic group of methyl-coenzyme M reductase (MCR), which plays a key role in methanogenesis and anaerobic methane oxidation. Catalyzes the ATP-dependent amidation of the two carboxylate groups at positions a and c of Ni-sirohydrochlorin, using L-glutamine or ammonia as the nitrogen source. This chain is Cobyrinate a,c-diamide synthase, found in Methanobrevibacter smithii (strain ATCC 35061 / DSM 861 / OCM 144 / PS).